Consider the following 119-residue polypeptide: Phenol 2-monooxygenase, oxygenase component DmpO (119 aa).

The multicomponent enzyme phenol hydroxylase is formed by DmpL (P1 component), DmpM (P2 component), DmpN (P3 component), DmpO (P4 component) and DmpP (P5 component). The oxygenase component is a dimer composed of three subunits, DmpL, DmpN and DmpO (DmpLNO).

The catalysed reaction is phenol + NADH + O2 + H(+) = catechol + NAD(+) + H2O. It participates in aromatic compound metabolism; phenol degradation. With respect to regulation, requires DmpM for efficient turnover. The activity of DmpLNO oxygenase is inhibited by dithiothreitol (DTT) by a mechanism apparently involving H(2)O(2) generation. In terms of biological role, part of a multicomponent enzyme which catalyzes the degradation of phenol and some of its methylated derivatives. DmpL, DmpN and DmpO form the oxygenase component of the complex. Required for growth on phenol and for in vitro phenol hydroxylase activity. This Pseudomonas sp. (strain CF600) protein is Phenol 2-monooxygenase, oxygenase component DmpO.